A 452-amino-acid polypeptide reads, in one-letter code: Cell division protein FtsZ (452 aa).

GTP is bound by residues 24–28 (GAGSN), 111–113 (GTG), Glu142, Arg146, and Asp190.

The protein belongs to the FtsZ family. Homodimer. Polymerizes to form a dynamic ring structure in a strictly GTP-dependent manner. Interacts directly with several other division proteins.

It is found in the cytoplasm. Functionally, essential cell division protein that forms a contractile ring structure (Z ring) at the future cell division site. The regulation of the ring assembly controls the timing and the location of cell division. One of the functions of the FtsZ ring is to recruit other cell division proteins to the septum to produce a new cell wall between the dividing cells. Binds GTP and shows GTPase activity. This Rickettsia prowazekii (strain Madrid E) protein is Cell division protein FtsZ.